We begin with the raw amino-acid sequence, 132 residues long: Salivary cystatin-L2 (132 aa).

The signal sequence occupies residues 1-18; sequence MTSSLALVLVFGGAAVCA. In terms of domain architecture, Cystatin spans 28 to 117; it reads ERSNQDDPEY…RTCTTVIYRN (90 aa). Residues 87–131 form a required for interaction with mouse ANXA2 region; sequence TCELTSTYNKDTCQANANAAQRTCTTVIYRNLQGEKSISSFECAA. 2 cysteine pairs are disulfide-bonded: Cys-88-Cys-99 and Cys-110-Cys-129.

Belongs to the cystatin family. As to quaternary structure, monomer. Interacts (via loop 2) with mouse ANXA2; the interaction results in reduced activation of mouse NLRC4 inflammasome formation upon Anaplasma phagocytophilum infection. In terms of tissue distribution, detected in salivary gland and midgut.

The protein resides in the secreted. Contributes to the suppression of the host's immune response to tick salivary proteins and is important for successful feeding on hosts. Inhibitor of cysteine proteinases. Inhibits host immune responses, probably via its inhibition of host cathepsins. Inhibits host papain (in vitro). Inhibits host cathepsin L (CTSL) (in vitro). Inhibits host cathepsin L2 (CTSV) (in vitro). Attenuates IFN-beta (IFNB1)-triggered JAK/STAT signaling pathway in mouse dendritic cells. Suppresses induction of interferon-stimulated gene IRF7 and production of CXCL10 in lipopolysaccharide (LPS)-activated dendritic cells. In terms of biological role, (Microbial infection) Down-regulates TLR2-mediated host responses to infection by Borrelia burgdorferi and the production of chemokines CCL3 and CXCL10 by host dendritic cells. Enhances infection by the tick-transmitted pathogen B.burgdorferi (in vitro). Functionally, (Microbial infection) Inhibits host inflammatory responses to Anaplasma phagocytophilum infection. Interacts with mouse ANXA2 and suppresses oligomerization of NLRC4, a key component of host inflammasomes that sense A.phagocytophilum infection. Indirectly targets caspase-1 (CASP1) activation and subsequent IL-1beta (IL1B) and IL18 release by inhibiting reactive oxygen species (ROS) production from NADPH oxidase complex in A.phagocytophilum-infected mouse macrophages. Its function is as follows. (Microbial infection) Promotes replication of tick-borne encephalitis virus in mouse dendritic cells and reduces anti-viral effect of host IFN-beta (IFNB1). This Ixodes scapularis (Black-legged tick) protein is Salivary cystatin-L2.